We begin with the raw amino-acid sequence, 100 residues long: Large ribosomal subunit protein bL21 (100 aa).

It belongs to the bacterial ribosomal protein bL21 family. In terms of assembly, part of the 50S ribosomal subunit. Contacts protein L20.

In terms of biological role, this protein binds to 23S rRNA in the presence of protein L20. In Rhodospirillum rubrum (strain ATCC 11170 / ATH 1.1.1 / DSM 467 / LMG 4362 / NCIMB 8255 / S1), this protein is Large ribosomal subunit protein bL21.